A 324-amino-acid chain; its full sequence is Acetyl-coenzyme A carboxylase carboxyl transferase subunit alpha (324 aa).

Positions 44 to 298 (QLEAKATQLR…KTAIVKSLDD (255 aa)) constitute a CoA carboxyltransferase C-terminal domain.

It belongs to the AccA family. In terms of assembly, acetyl-CoA carboxylase is a heterohexamer composed of biotin carboxyl carrier protein (AccB), biotin carboxylase (AccC) and two subunits each of ACCase subunit alpha (AccA) and ACCase subunit beta (AccD).

The protein localises to the cytoplasm. The catalysed reaction is N(6)-carboxybiotinyl-L-lysyl-[protein] + acetyl-CoA = N(6)-biotinyl-L-lysyl-[protein] + malonyl-CoA. Its pathway is lipid metabolism; malonyl-CoA biosynthesis; malonyl-CoA from acetyl-CoA: step 1/1. In terms of biological role, component of the acetyl coenzyme A carboxylase (ACC) complex. First, biotin carboxylase catalyzes the carboxylation of biotin on its carrier protein (BCCP) and then the CO(2) group is transferred by the carboxyltransferase to acetyl-CoA to form malonyl-CoA. The polypeptide is Acetyl-coenzyme A carboxylase carboxyl transferase subunit alpha (Trichodesmium erythraeum (strain IMS101)).